Consider the following 224-residue polypeptide: ATP synthase subunit a (224 aa).

6 helical membrane passes run 17–37, 72–92, 99–119, 125–145, 170–190, and 195–215; these read LSLN…IYWL, IFIS…FPYI, LTLT…YGWI, MFAH…MVCI, LLLT…VTFL, and IALL…FAVL.

It belongs to the ATPase A chain family. F-type ATPases have 2 components, CF(1) - the catalytic core - and CF(0) - the membrane proton channel. CF(1) has five subunits: alpha(3), beta(3), gamma(1), delta(1), epsilon(1). CF(0) has three main subunits: a, b and c.

It is found in the mitochondrion inner membrane. Its function is as follows. Mitochondrial membrane ATP synthase (F(1)F(0) ATP synthase or Complex V) produces ATP from ADP in the presence of a proton gradient across the membrane which is generated by electron transport complexes of the respiratory chain. F-type ATPases consist of two structural domains, F(1) - containing the extramembraneous catalytic core and F(0) - containing the membrane proton channel, linked together by a central stalk and a peripheral stalk. During catalysis, ATP synthesis in the catalytic domain of F(1) is coupled via a rotary mechanism of the central stalk subunits to proton translocation. Key component of the proton channel; it may play a direct role in the translocation of protons across the membrane. The sequence is that of ATP synthase subunit a (mt:ATPase6) from Drosophila simulans (Fruit fly).